Here is a 285-residue protein sequence, read N- to C-terminus: HTH-type transcriptional regulator MurR (285 aa).

The HTH rpiR-type domain occupies 1–77; the sequence is MLYLTKIRNA…MALIGEYSAS (77 aa). Positions 37 to 56 form a DNA-binding region, H-T-H motif; the sequence is SRKMAKLLGISQSSIVKFAQ. In terms of domain architecture, SIS spans 128–268; sequence IIEAISKAPF…FVGLVQLNDV (141 aa).

As to quaternary structure, homotetramer.

It functions in the pathway amino-sugar metabolism; N-acetylmuramate degradation [regulation]. Its function is as follows. Represses the expression of the murPQ operon involved in the uptake and degradation of N-acetylmuramic acid (MurNAc). Binds to two adjacent inverted repeats within the operator region. MurNAc 6-phosphate, the substrate of MurQ, is the specific inducer that weakens binding of MurR to the operator. The protein is HTH-type transcriptional regulator MurR of Escherichia coli O17:K52:H18 (strain UMN026 / ExPEC).